The following is a 117-amino-acid chain: Large ribosomal subunit protein eL18 (117 aa).

This sequence belongs to the eukaryotic ribosomal protein eL18 family.

The polypeptide is Large ribosomal subunit protein eL18 (Archaeoglobus fulgidus (strain ATCC 49558 / DSM 4304 / JCM 9628 / NBRC 100126 / VC-16)).